Here is a 106-residue protein sequence, read N- to C-terminus: Replication restart protein PriB (106 aa).

Positions 4–103 (TNRLVLSGTV…LHAEQIEFID (100 aa)) constitute an SSB domain.

It belongs to the PriB family. Homodimer. Interacts with PriA and DnaT. Component of the replication restart primosome. Primosome assembly occurs via a 'hand-off' mechanism. PriA binds to replication forks, subsequently PriB then DnaT bind; DnaT then displaces ssDNA to generate the helicase loading substrate.

Involved in the restart of stalled replication forks, which reloads the replicative helicase on sites other than the origin of replication; the PriA-PriB pathway is the major replication restart pathway. During primosome assembly it facilitates complex formation between PriA and DnaT on DNA; stabilizes PriA on DNA. Stimulates the DNA unwinding activity of PriA helicase. The chain is Replication restart protein PriB from Yersinia pestis.